The sequence spans 256 residues: Nuclear shuttle protein (256 aa).

The short motif at 21 to 42 (YQGFRRTAIVTRHDGKRRQHQS) is the Bipartite nuclear localization signal element. Residues 81 to 96 (QLGKIEPNRCRSYIKL) carry the Nuclear localization signal motif. An interaction with Arabidopsis thaliana NSI protein region spans residues 150 to 187 (ELFGARINSHGNLAVMPSLKDRFYIRHLLKRVLSVDKD).

It belongs to the begomovirus nuclear shuttle protein family. In terms of assembly, binds to single-stranded and double-stranded viral DNA. Interacts with the host nuclear shuttle interacting (NSI) protein. This interaction may allow NSP to recruit NSI monomers to the viral genome and thus regulate nuclear export of viral genome by NSP.

It localises to the host nucleus. The protein resides in the host cytoplasm. The protein localises to the host cell membrane. In terms of biological role, binds to the genomic viral ssDNA, shuttles it into and out of the cell nucleus. Begomoviruses use 2 proteins to transport their DNA from cell to cell. The nuclear shuttle protein (NSP) shuttles it between nucleus and cytoplasm and the movement protein (MP) probably transports the DNA-NSP complex to the cell periphery and facilitates movement across the cell wall. The sequence is that of Nuclear shuttle protein from Macroptilium lathyroides (Lima bean).